Consider the following 110-residue polypeptide: Phosphoribosyl-AMP cyclohydrolase (110 aa).

D80 is a Mg(2+) binding site. A Zn(2+)-binding site is contributed by C81. The Mg(2+) site is built by D82 and D84. C97 and C104 together coordinate Zn(2+).

The protein belongs to the PRA-CH family. Homodimer. It depends on Mg(2+) as a cofactor. The cofactor is Zn(2+).

It localises to the cytoplasm. It catalyses the reaction 1-(5-phospho-beta-D-ribosyl)-5'-AMP + H2O = 1-(5-phospho-beta-D-ribosyl)-5-[(5-phospho-beta-D-ribosylamino)methylideneamino]imidazole-4-carboxamide. Its pathway is amino-acid biosynthesis; L-histidine biosynthesis; L-histidine from 5-phospho-alpha-D-ribose 1-diphosphate: step 3/9. In terms of biological role, catalyzes the hydrolysis of the adenine ring of phosphoribosyl-AMP. In Clostridium botulinum (strain ATCC 19397 / Type A), this protein is Phosphoribosyl-AMP cyclohydrolase.